The sequence spans 373 residues: Methionine import ATP-binding protein MetN 1 (373 aa).

Residues 29–270 enclose the ABC transporter domain; that stretch reads ILIDRVRKVY…PRHEVTRRFV (242 aa). Residue 67-74 coordinates ATP; the sequence is GRSGAGKS.

It belongs to the ABC transporter superfamily. Methionine importer (TC 3.A.1.24) family. As to quaternary structure, the complex is composed of two ATP-binding proteins (MetN), two transmembrane proteins (MetI) and a solute-binding protein (MetQ).

It localises to the cell inner membrane. It carries out the reaction L-methionine(out) + ATP + H2O = L-methionine(in) + ADP + phosphate + H(+). The enzyme catalyses D-methionine(out) + ATP + H2O = D-methionine(in) + ADP + phosphate + H(+). Functionally, part of the ABC transporter complex MetNIQ involved in methionine import. Responsible for energy coupling to the transport system. The protein is Methionine import ATP-binding protein MetN 1 of Rhodopseudomonas palustris (strain ATCC BAA-98 / CGA009).